The primary structure comprises 446 residues: Sphingomyelinase phosphodiesterase C (446 aa).

A signal peptide spans 1–26 (MKFRNNLTLYLIFIIVFTIYISLTIS). The N-linked (GlcNAc...) asparagine glycan is linked to Asn-6. 2 residues coordinate Zn(2+): Asp-39 and His-41. Cys-56 and Cys-78 form a disulfide bridge. Asp-107 contributes to the Zn(2+) binding site. Asn-118 and Asn-128 each carry an N-linked (GlcNAc...) asparagine glycan. Zn(2+) is bound at residue Asn-148. 4 N-linked (GlcNAc...) asparagine glycosylation sites follow: Asn-178, Asn-217, Asn-229, and Asn-234. Zn(2+)-binding residues include His-247, His-287, and His-289. N-linked (GlcNAc...) asparagine glycosylation is found at Asn-342 and Asn-357. Cys-429 and Cys-442 are oxidised to a cystine.

The protein belongs to the acid sphingomyelinase family. Zn(2+) is required as a cofactor.

The protein localises to the secreted. This chain is Sphingomyelinase phosphodiesterase C (sgmC), found in Dictyostelium discoideum (Social amoeba).